Here is a 270-residue protein sequence, read N- to C-terminus: Indole-3-glycerol phosphate synthase (270 aa).

This sequence belongs to the TrpC family.

The enzyme catalyses 1-(2-carboxyphenylamino)-1-deoxy-D-ribulose 5-phosphate + H(+) = (1S,2R)-1-C-(indol-3-yl)glycerol 3-phosphate + CO2 + H2O. The protein operates within amino-acid biosynthesis; L-tryptophan biosynthesis; L-tryptophan from chorismate: step 4/5. This Beutenbergia cavernae (strain ATCC BAA-8 / DSM 12333 / CCUG 43141 / JCM 11478 / NBRC 16432 / NCIMB 13614 / HKI 0122) protein is Indole-3-glycerol phosphate synthase.